The following is a 643-amino-acid chain: Inorganic pyrophosphatase TTM1 (643 aa).

The N-terminal 15 residues, 1 to 15 (MALDSSVALSPRRRH), are a transit peptide targeting the mitochondrion. A CYTH domain is found at 248 to 410 (NPTYILKSSK…PHTYIEQIQL (163 aa)). The helical transmembrane segment at 618 to 638 (LESSTVPILLGLAIGCVGIFA) threads the bilayer.

Mg(2+) is required as a cofactor. Ubiquitously expressed in all tissues, with strong expression detected in senescent leaves.

It is found in the mitochondrion outer membrane. It carries out the reaction diphosphate + H2O = 2 phosphate + H(+). Its function is as follows. Exhibits pyrophosphatase activity with stronger affinity for pyrophosphate (PPi), moderate affinity for ATP and ADP, and weak affinity for tripolyphosphate (PPPi). No activity observed toward uridine substrate. Positively regulates natural and dark-induced leaf senescence. The chain is Inorganic pyrophosphatase TTM1 from Arabidopsis thaliana (Mouse-ear cress).